Here is a 33-residue protein sequence, read N- to C-terminus: Pardaxin P-3 (33 aa).

The protein belongs to the pardaxin family. In aqueous solution exists as a tetramer.

Its subcellular location is the secreted. The protein localises to the target cell membrane. Its function is as follows. Exhibits unusual shark repellent and surfactant properties. Forms voltage-dependent, ion-permeable channels in membranes. At high concentration causes cell membrane lysis. The chain is Pardaxin P-3 from Pardachirus pavoninus (Peacock sole).